Here is a 97-residue protein sequence, read N- to C-terminus: Scorpine-like peptide Ev37 (97 aa).

A signal peptide spans 1–19; that stretch reads MNSKLTVIVLLALITIASC. Residues 55–95 form the BetaSPN-type CS-alpha/beta domain; it reads QNLCAFNVDTVGMCDADCKRQGKAKGVCHGTKCKCDVELSY. 3 disulfides stabilise this stretch: Cys-58–Cys-82, Cys-68–Cys-87, and Cys-72–Cys-89.

Belongs to the long chain scorpion toxin family. Class 3 subfamily. As to expression, expressed by the venom gland.

It localises to the secreted. Functionally, selectively inhibits Kv1.3/KCNA3 channel (IC(50)=0.95 uM). Both N-terminal and C-terminal domains are likely involved in the interaction with Kv1.3/KCNA3, since neither its N-terminal domain (1-36) nor its C-terminal domain (37-78) block Kv1.3/KCNA3 channel. This Euscorpiops validus (Scorpion) protein is Scorpine-like peptide Ev37.